The primary structure comprises 95 residues: Co-chaperonin GroES (95 aa).

The tract at residues 20–45 is disordered; the sequence is KTKGGLIIPDSAKEKPAEGEITSVGE.

This sequence belongs to the GroES chaperonin family. In terms of assembly, heptamer of 7 subunits arranged in a ring. Interacts with the chaperonin GroEL.

It is found in the cytoplasm. In terms of biological role, together with the chaperonin GroEL, plays an essential role in assisting protein folding. The GroEL-GroES system forms a nano-cage that allows encapsulation of the non-native substrate proteins and provides a physical environment optimized to promote and accelerate protein folding. GroES binds to the apical surface of the GroEL ring, thereby capping the opening of the GroEL channel. In Paracoccus denitrificans, this protein is Co-chaperonin GroES.